The chain runs to 628 residues: MGDLPGSTGGGSGPAAAGNASGNSSSAGNTGLGVAGTTGVDRPPSPARLSHTSEKHPKVTLTELNMLRRHRELCDVVLNVGGRKIFAHRVILSACSSYFCAMFTGELEESRQTEVTIRDIDENAMELLIDFCYTAHIIVEESNVQTLLPAACLLQLVEIQDICCEFLKRQLDPTNCLGIRAFADTHSCRELLRIADKFTQHNFQEVMESEEFLLLPVGQLVDIICSDELNVRSEEQVFNAVMSWLKYNVAERRQHLAQVLQHVRLPLLSPKFLVGTVGSDLLVRSDEACRDLVDEAKNYLLLPQERPLMQGPRTRPRKPTRRGEVLFAVGGWCSGDAIASVERFDPQTNDWKMVAPMSKRRCGVGVAVLNDLLYAVGGHDGQSYLNSIERYDPQTNQWSCDVAPTTSCRTSVGVAVLDGFLYAVGGQDGVQCLNHVERYDPKENKWSKVAPMTTRRLGVAVAVLGGFLYAIGGSDGQCPLNTVERYDPRQNKWVAVSPMSTRRKHLGCAVFNNYIYAVGGRDDCMELSSAERYNPLTNTWSPIVAMTSRRSGVGLAVVNGQLYAVGGFDGSAYLKTIEVYDPETNQWRLCGCMNYRRLGGGVGVMRAPQTENYMWCENSLKQHNNPPS.

The segment at 1–56 (MGDLPGSTGGGSGPAAAGNASGNSSSAGNTGLGVAGTTGVDRPPSPARLSHTSEKH) is disordered. The span at 14 to 29 (PAAAGNASGNSSSAGN) shows a compositional bias: low complexity. The 68-residue stretch at 74–141 (CDVVLNVGGR…CYTAHIIVEE (68 aa)) folds into the BTB domain. Positions 176-278 (CLGIRAFADT…SPKFLVGTVG (103 aa)) constitute a BACK domain. Kelch repeat units follow at residues 325 to 371 (VLFA…VLND), 373 to 419 (LYAV…VLDG), 420 to 466 (FLYA…VLGG), 468 to 513 (LYAI…VFNN), 515 to 560 (IYAV…VVNG), and 561 to 607 (QLYA…VMRA).

It participates in protein modification; protein ubiquitination. Probable substrate-specific adapter of an E3 ubiquitin-protein ligase complex which mediates the ubiquitination and subsequent proteasomal degradation of target proteins. May have a role in synapse differentiation and growth. This Drosophila persimilis (Fruit fly) protein is Kelch-like protein diablo.